The primary structure comprises 54 residues: ATP synthase protein 8 (54 aa).

Residues 8–28 form a helical membrane-spanning segment; it reads WWLLNFFLGWTSLLVIFIILL.

This sequence belongs to the ATPase protein 8 family. As to quaternary structure, F-type ATPases have 2 components, CF(1) - the catalytic core - and CF(0) - the membrane proton channel.

The protein resides in the mitochondrion membrane. Functionally, mitochondrial membrane ATP synthase (F(1)F(0) ATP synthase or Complex V) produces ATP from ADP in the presence of a proton gradient across the membrane which is generated by electron transport complexes of the respiratory chain. F-type ATPases consist of two structural domains, F(1) - containing the extramembraneous catalytic core and F(0) - containing the membrane proton channel, linked together by a central stalk and a peripheral stalk. During catalysis, ATP synthesis in the catalytic domain of F(1) is coupled via a rotary mechanism of the central stalk subunits to proton translocation. Part of the complex F(0) domain. Minor subunit located with subunit a in the membrane. The chain is ATP synthase protein 8 (MT-ATP8) from Patiria pectinifera (Starfish).